The following is a 689-amino-acid chain: Elongation factor G (689 aa).

The 275-residue stretch at 8 to 282 (KKTRNIGIMA…AVIDYLPSPV (275 aa)) folds into the tr-type G domain. GTP-binding positions include 17-24 (AHIDAGKT), 81-85 (DTPGH), and 135-138 (NKMD).

Belongs to the TRAFAC class translation factor GTPase superfamily. Classic translation factor GTPase family. EF-G/EF-2 subfamily.

It localises to the cytoplasm. Functionally, catalyzes the GTP-dependent ribosomal translocation step during translation elongation. During this step, the ribosome changes from the pre-translocational (PRE) to the post-translocational (POST) state as the newly formed A-site-bound peptidyl-tRNA and P-site-bound deacylated tRNA move to the P and E sites, respectively. Catalyzes the coordinated movement of the two tRNA molecules, the mRNA and conformational changes in the ribosome. This is Elongation factor G from Halothermothrix orenii (strain H 168 / OCM 544 / DSM 9562).